A 421-amino-acid chain; its full sequence is Anthranilate synthase component 1 (421 aa).

Residues S31 and P207 to M209 each bind L-tryptophan. G242 to T243 serves as a coordination point for chorismate. E269 provides a ligand contact to Mg(2+). Chorismate is bound by residues Y357, R377, G391–G393, and G393. Residue E406 coordinates Mg(2+).

This sequence belongs to the anthranilate synthase component I family. As to quaternary structure, heterotetramer consisting of two non-identical subunits: a beta subunit (TrpG) and a large alpha subunit (TrpE). It depends on Mg(2+) as a cofactor.

The enzyme catalyses chorismate + L-glutamine = anthranilate + pyruvate + L-glutamate + H(+). It participates in amino-acid biosynthesis; L-tryptophan biosynthesis; L-tryptophan from chorismate: step 1/5. With respect to regulation, cooperatively feedback inhibited by tryptophan. Its function is as follows. Part of a heterotetrameric complex that catalyzes the two-step biosynthesis of anthranilate, an intermediate in the biosynthesis of L-tryptophan. In the first step, the glutamine-binding beta subunit (TrpG) of anthranilate synthase (AS) provides the glutamine amidotransferase activity which generates ammonia as a substrate that, along with chorismate, is used in the second step, catalyzed by the large alpha subunit of AS (TrpE) to produce anthranilate. In the absence of TrpG, TrpE can synthesize anthranilate directly from chorismate and high concentrations of ammonia. This Saccharolobus solfataricus (strain ATCC 35092 / DSM 1617 / JCM 11322 / P2) (Sulfolobus solfataricus) protein is Anthranilate synthase component 1 (trpE).